The sequence spans 697 residues: Phosphoribosylformylglycinamidine synthase subunit PurL (697 aa).

Residue H34 is part of the active site. Residues Y37 and K76 each coordinate ATP. E78 provides a ligand contact to Mg(2+). Substrate is bound by residues 79–82 (SHNH) and R101. The active-site Proton acceptor is H80. Residue D102 participates in Mg(2+) binding. Q224 is a substrate binding site. A Mg(2+)-binding site is contributed by D250. 294 to 296 (ETQ) serves as a coordination point for substrate. Positions 472 and 509 each coordinate ATP. Residue S512 participates in substrate binding.

It belongs to the FGAMS family. As to quaternary structure, monomer. Part of the FGAM synthase complex composed of 1 PurL, 1 PurQ and 2 PurS subunits.

The protein localises to the cytoplasm. It carries out the reaction N(2)-formyl-N(1)-(5-phospho-beta-D-ribosyl)glycinamide + L-glutamine + ATP + H2O = 2-formamido-N(1)-(5-O-phospho-beta-D-ribosyl)acetamidine + L-glutamate + ADP + phosphate + H(+). Its pathway is purine metabolism; IMP biosynthesis via de novo pathway; 5-amino-1-(5-phospho-D-ribosyl)imidazole from N(2)-formyl-N(1)-(5-phospho-D-ribosyl)glycinamide: step 1/2. Part of the phosphoribosylformylglycinamidine synthase complex involved in the purines biosynthetic pathway. Catalyzes the ATP-dependent conversion of formylglycinamide ribonucleotide (FGAR) and glutamine to yield formylglycinamidine ribonucleotide (FGAM) and glutamate. The FGAM synthase complex is composed of three subunits. PurQ produces an ammonia molecule by converting glutamine to glutamate. PurL transfers the ammonia molecule to FGAR to form FGAM in an ATP-dependent manner. PurS interacts with PurQ and PurL and is thought to assist in the transfer of the ammonia molecule from PurQ to PurL. The chain is Phosphoribosylformylglycinamidine synthase subunit PurL from Pyrobaculum aerophilum (strain ATCC 51768 / DSM 7523 / JCM 9630 / CIP 104966 / NBRC 100827 / IM2).